The sequence spans 475 residues: DnaB-like replicative helicase (475 aa).

Positions 165-444 (YMNKARKVPF…STPTEVNEVA (280 aa)) constitute an SF4 helicase domain. ATP is bound at residue 197 to 204 (AGVNVGKS). Positions 456 to 475 (YQRNESTRAQLDALANELKF) are interaction with the helicase assembly factor.

It belongs to the helicase family. DnaB subfamily. Homohexamer. The homohexamer is a trimer of asymmetric dimers. Interacts with the DNA primase; this interaction forms the active primosome complex, which is composed of 6 helicase and 1 primase subunits and expresses full helicase and primase activities. Interacts (via C-terminus) with the helicase assembly factor; this interaction brings about the rapid assembly of the helicase onto ssDNA. Part of the replicase complex that includes the DNA polymerase, the polymerase clamp, the clamp loader complex, the single-stranded DNA binding protein, the primase, the DnaB-like replicative helicase and the helicase assembly factor.

Functionally, ATP-dependent DNA helicase essential for viral DNA replication and recombination. The helicase moves 5' -&gt; 3' on the lagging strand template, unwinding the DNA duplex ahead of the leading strand polymerase at the replication fork and generating ssDNA for both leading and lagging strand synthesis. Interaction with the primase allows the primase to initiate lagging strand synthesis and fully activates the helicase. Loaded by the helicase assembly factor on replication forks that begin at discrete replication origin sequences, as well as on forks that are created during recombination. This Escherichia coli (Bacteriophage T4) protein is DnaB-like replicative helicase.